A 134-amino-acid chain; its full sequence is Cytochrome b5 (134 aa).

The 77-residue stretch at Val6 to Val82 folds into the Cytochrome b5 heme-binding domain. Positions 41 and 65 each coordinate heme. The helical transmembrane segment at Trp111–Thr131 threads the bilayer.

Belongs to the cytochrome b5 family.

It is found in the endoplasmic reticulum membrane. Its subcellular location is the microsome membrane. In terms of biological role, cytochrome b5 is a membrane bound hemoprotein which function as an electron carrier for several membrane bound oxygenases. This is Cytochrome b5 (Cyt-b5) from Musca domestica (House fly).